Here is a 623-residue protein sequence, read N- to C-terminus: Chaperone protein HtpG (623 aa).

Positions 1–328 (MTQEKKKFDA…SEDLPLNISR (328 aa)) are a; substrate-binding. Residues 329–544 (ESLQHNSILD…ESAMDIRMER (216 aa)) are b. The segment at 545–623 (FLIEQKQIAN…DIVQKAILSL (79 aa)) is c.

Belongs to the heat shock protein 90 family. In terms of assembly, homodimer.

It is found in the cytoplasm. In terms of biological role, molecular chaperone. Has ATPase activity. This Rickettsia canadensis (strain McKiel) protein is Chaperone protein HtpG.